The sequence spans 569 residues: Zinc finger and BTB domain-containing protein 7A (569 aa).

The region spanning 34–101 (CDVVILVEGR…AYTATLTVST (68 aa)) is the BTB domain. The disordered stretch occupies residues 214-304 (YGPGPPADRP…LSGAAEGEDG (91 aa)). The interval 275 to 569 (EEEAAALSEA…VATAEGNFAT (295 aa)) is mediates interaction with KHDRBS1. A compositionally biased stretch (low complexity) spans 279-288 (AALSEAAPEP). Phosphoserine is present on residues serine 331 and serine 335. The tract at residues 343–569 (MDYYLKYFSG…VATAEGNFAT (227 aa)) is mediates interaction with RELA. A mediates interaction with SMAD4 region spans residues 371–569 (RAKAFQKCPI…VATAEGNFAT (199 aa)). 2 C2H2-type zinc fingers span residues 376–398 (QKCP…IRTH) and 404–426 (YECN…MRKH). Residue lysine 430 forms a Glycyl lysine isopeptide (Lys-Gly) (interchain with G-Cter in SUMO2) linkage. Residues 432–454 (YLCQQCGAAFAHNYDLKNHMRVH) form a C2H2-type 3 zinc finger. The C2H2-type 4; atypical zinc-finger motif lies at 460–484 (YQCDSCCKTFVRSDHLHRHLKKDGC). The tract at residues 480-569 (KKDGCNGVPS…VATAEGNFAT (90 aa)) is disordered. Residues 498–519 (RGVPPDVPAGAGAPPGLPDAPR) are compositionally biased toward low complexity. A Glycyl lysine isopeptide (Lys-Gly) (interchain with G-Cter in SUMO2) cross-link involves residue lysine 527. Residue serine 537 is modified to Phosphoserine. Residues 548-557 (GSGGDDGAGG) are compositionally biased toward gly residues.

Homodimer. Interacts with BCL6. Interacts with RELA; involved in the control by RELA of the accessibility of target gene promoters. Interacts with AR (via NR LBD domain); the interaction is direct and androgen-dependent. Interacts with NCOR1. Interacts with NCOR2. Interacts with SMAD4; the interaction is direct and stimulated by TGFB1. Interacts with HDAC1. Interacts with SP1; ZBTB7A prevents the binding to GC-rich motifs in promoters and represses the transcriptional activity of SP1. Interacts with the DNA-dependent protein kinase complex/DNA-PKc. Interacts with KHDRBS1; negatively regulates KHDRBS1 splicing activity. Post-translationally, sumoylated. Undergoes sumoylation with SUMO1 that may regulate its transcriptional activity. Widely expressed. In normal thymus, expressed in medullary epithelial cells and Hassle's corpuscles (at protein level). In the spleen, mainly expressed in the white pulp germinal centers (at protein level). Up-regulated in thymic lymphomas.

The protein resides in the nucleus. In terms of biological role, transcription factor that represses the transcription of a wide range of genes involved in cell proliferation and differentiation. Directly and specifically binds to the consensus sequence 5'-[GA][CA]GACCCCCCCCC-3' and represses transcription both by regulating the organization of chromatin and through the direct recruitment of transcription factors to gene regulatory regions. Negatively regulates SMAD4 transcriptional activity in the TGF-beta signaling pathway through these two mechanisms. That is, recruits the chromatin regulator HDAC1 to the SMAD4-DNA complex and in parallel prevents the recruitment of the transcriptional activators CREBBP and EP300. Collaborates with transcription factors like RELA to modify the accessibility of gene transcription regulatory regions to secondary transcription factors. Also directly interacts with transcription factors like SP1 to prevent their binding to DNA. Functions as an androgen receptor/AR transcriptional corepressor by recruiting NCOR1 and NCOR2 to the androgen response elements/ARE on target genes. Thereby, negatively regulates androgen receptor signaling and androgen-induced cell proliferation. Involved in the switch between fetal and adult globin expression during erythroid cells maturation. Through its interaction with the NuRD complex regulates chromatin at the fetal globin genes to repress their transcription. Specifically represses the transcription of the tumor suppressor ARF isoform from the CDKN2A gene. Efficiently abrogates E2F1-dependent CDKN2A transactivation. Regulates chondrogenesis through the transcriptional repression of specific genes via a mechanism that also requires histone deacetylation. Regulates cell proliferation through the transcriptional regulation of genes involved in glycolysis. Involved in adipogenesis through the regulation of genes involved in adipocyte differentiation. Plays a key role in the differentiation of lymphoid progenitors into B and T lineages. Promotes differentiation towards the B lineage by inhibiting the T-cell instructive Notch signaling pathway through the specific transcriptional repression of Notch downstream target genes. Also regulates osteoclast differentiation. May also play a role, independently of its transcriptional activity, in double-strand break repair via classical non-homologous end joining/cNHEJ. Recruited to double-strand break sites on damage DNA, interacts with the DNA-dependent protein kinase complex and directly regulates its stability and activity in DNA repair. May also modulate the splicing activity of KHDRBS1 toward BCL2L1 in a mechanism which is histone deacetylase-dependent and thereby negatively regulates the pro-apoptotic effect of KHDRBS1. In Mus musculus (Mouse), this protein is Zinc finger and BTB domain-containing protein 7A.